A 134-amino-acid chain; its full sequence is Large ribosomal subunit protein uL16 (134 aa).

The span at 1-20 (MLLQPKRTKFRKMHKGRNRG) shows a compositional bias: basic residues. The disordered stretch occupies residues 1 to 21 (MLLQPKRTKFRKMHKGRNRGT).

The protein belongs to the universal ribosomal protein uL16 family. In terms of assembly, part of the 50S ribosomal subunit.

Its function is as follows. Binds 23S rRNA and is also seen to make contacts with the A and possibly P site tRNAs. The chain is Large ribosomal subunit protein uL16 from Blochmanniella pennsylvanica (strain BPEN).